The following is a 341-amino-acid chain: Anthranilate phosphoribosyltransferase (341 aa).

5-phospho-alpha-D-ribose 1-diphosphate is bound by residues glycine 79, 82–83, threonine 87, 89–92, 107–115, and serine 119; these read GD, NIST, and KHGNRAVSS. Glycine 79 serves as a coordination point for anthranilate. Serine 91 provides a ligand contact to Mg(2+). Asparagine 110 serves as a coordination point for anthranilate. Arginine 165 contacts anthranilate. Aspartate 224 and glutamate 225 together coordinate Mg(2+).

This sequence belongs to the anthranilate phosphoribosyltransferase family. Homodimer. Mg(2+) is required as a cofactor.

The enzyme catalyses N-(5-phospho-beta-D-ribosyl)anthranilate + diphosphate = 5-phospho-alpha-D-ribose 1-diphosphate + anthranilate. Its pathway is amino-acid biosynthesis; L-tryptophan biosynthesis; L-tryptophan from chorismate: step 2/5. Its function is as follows. Catalyzes the transfer of the phosphoribosyl group of 5-phosphorylribose-1-pyrophosphate (PRPP) to anthranilate to yield N-(5'-phosphoribosyl)-anthranilate (PRA). The sequence is that of Anthranilate phosphoribosyltransferase from Bacillus cereus (strain G9842).